The sequence spans 292 residues: Nitrogenase iron protein 1 (292 aa).

Gly12–Ser19 lines the ATP pocket. Position 101 (Cys101) interacts with [4Fe-4S] cluster. At Arg104 the chain carries ADP-ribosylarginine; by dinitrogenase reductase ADP-ribosyltransferase. Cys135 contacts [4Fe-4S] cluster.

It belongs to the NifH/BchL/ChlL family. As to quaternary structure, homodimer. [4Fe-4S] cluster is required as a cofactor. The reversible ADP-ribosylation of Arg-104 inactivates the nitrogenase reductase and regulates nitrogenase activity.

The catalysed reaction is N2 + 8 reduced [2Fe-2S]-[ferredoxin] + 16 ATP + 16 H2O = H2 + 8 oxidized [2Fe-2S]-[ferredoxin] + 2 NH4(+) + 16 ADP + 16 phosphate + 6 H(+). The key enzymatic reactions in nitrogen fixation are catalyzed by the nitrogenase complex, which has 2 components: the iron protein and the molybdenum-iron protein. This is Nitrogenase iron protein 1 (nifH1) from Paenibacillus durus (Paenibacillus azotofixans).